The sequence spans 249 residues: Indole-3-glycerol phosphate synthase (249 aa).

Belongs to the TrpC family.

It carries out the reaction 1-(2-carboxyphenylamino)-1-deoxy-D-ribulose 5-phosphate + H(+) = (1S,2R)-1-C-(indol-3-yl)glycerol 3-phosphate + CO2 + H2O. It participates in amino-acid biosynthesis; L-tryptophan biosynthesis; L-tryptophan from chorismate: step 4/5. The chain is Indole-3-glycerol phosphate synthase from Pyrobaculum neutrophilum (strain DSM 2338 / JCM 9278 / NBRC 100436 / V24Sta) (Thermoproteus neutrophilus).